The sequence spans 495 residues: Glutamate--tRNA ligase (495 aa).

Residues 12 to 22 (PSPTGHLHIGN) carry the 'HIGH' region motif. Residues 259-263 (KLSKR) carry the 'KMSKS' region motif. Lys262 provides a ligand contact to ATP.

Belongs to the class-I aminoacyl-tRNA synthetase family. Glutamate--tRNA ligase type 1 subfamily. In terms of assembly, monomer.

The protein localises to the cytoplasm. It catalyses the reaction tRNA(Glu) + L-glutamate + ATP = L-glutamyl-tRNA(Glu) + AMP + diphosphate. In terms of biological role, catalyzes the attachment of glutamate to tRNA(Glu) in a two-step reaction: glutamate is first activated by ATP to form Glu-AMP and then transferred to the acceptor end of tRNA(Glu). The polypeptide is Glutamate--tRNA ligase (Pediococcus pentosaceus (strain ATCC 25745 / CCUG 21536 / LMG 10740 / 183-1w)).